A 476-amino-acid chain; its full sequence is Glycogen synthase (476 aa).

Lys15 is a binding site for ADP-alpha-D-glucose.

This sequence belongs to the glycosyltransferase 1 family. Bacterial/plant glycogen synthase subfamily.

It carries out the reaction [(1-&gt;4)-alpha-D-glucosyl](n) + ADP-alpha-D-glucose = [(1-&gt;4)-alpha-D-glucosyl](n+1) + ADP + H(+). The protein operates within glycan biosynthesis; glycogen biosynthesis. Synthesizes alpha-1,4-glucan chains using ADP-glucose. The protein is Glycogen synthase of Mycoplasma mobile (strain ATCC 43663 / 163K / NCTC 11711) (Mesomycoplasma mobile).